The following is a 621-amino-acid chain: tRNA uridine 5-carboxymethylaminomethyl modification enzyme MnmG (621 aa).

8 to 13 (GAGHAG) lines the FAD pocket. Residues 199-227 (PRIDRRSVDYSRVEEQKGDENPPPFSFST) are disordered. Basic and acidic residues predominate over residues 200–218 (RIDRRSVDYSRVEEQKGDE). NAD(+) is bound at residue 269 to 283 (GPRYCPSIEDKIFRF).

It belongs to the MnmG family. As to quaternary structure, homodimer. Heterotetramer of two MnmE and two MnmG subunits. FAD is required as a cofactor.

The protein resides in the cytoplasm. In terms of biological role, NAD-binding protein involved in the addition of a carboxymethylaminomethyl (cmnm) group at the wobble position (U34) of certain tRNAs, forming tRNA-cmnm(5)s(2)U34. This chain is tRNA uridine 5-carboxymethylaminomethyl modification enzyme MnmG, found in Chlorobium luteolum (strain DSM 273 / BCRC 81028 / 2530) (Pelodictyon luteolum).